Consider the following 440-residue polypeptide: Gap junction alpha-8 protein (440 aa).

Residues Gly2–Glu12 lie within the membrane without spanning it. Residues Glu13–Ile21 are Cytoplasmic-facing. The chain crosses the membrane as a helical span at residues Gly22–Glu42. Over Phe43–Pro71 the chain is Extracellular. 3 disulfide bridges follow: Cys54/Cys201, Cys61/Cys195, and Cys65/Cys190. A helical transmembrane segment spans residues Ile72–Tyr92. Residues Val93–His161 are Cytoplasmic-facing. The tract at residues Ala111–Lys143 is disordered. The chain crosses the membrane as a helical span at residues Ile162–Phe182. At Arg183 to Thr210 the chain is on the extracellular side. The chain crosses the membrane as a helical span at residues Ile211–Met231. Over Ser232–Ile440 the chain is Cytoplasmic. The interval Val338 to Ile440 is disordered. 2 stretches are compositionally biased toward basic and acidic residues: residues Val353–Ala364 and Pro374–Thr399. The span at Leu423–Arg432 shows a compositional bias: low complexity.

This sequence belongs to the connexin family. Alpha-type (group II) subfamily. As to quaternary structure, a hemichannel or connexon is composed of a hexamer of connexins. A functional gap junction is formed by the apposition of two hemichannels. Forms heteromeric channels with GJA3. As to expression, detected in eye lens (at protein level). Eye lens.

Its subcellular location is the cell membrane. It is found in the cell junction. The protein resides in the gap junction. In terms of biological role, structural component of eye lens gap junctions. Gap junctions are dodecameric channels that connect the cytoplasm of adjoining cells. They are formed by the docking of two hexameric hemichannels, one from each cell membrane. Small molecules and ions diffuse from one cell to a neighboring cell via the central pore. In Mus musculus (Mouse), this protein is Gap junction alpha-8 protein (Gja8).